The following is a 349-amino-acid chain: Holliday junction branch migration complex subunit RuvB (349 aa).

The tract at residues 1–183 is large ATPase domain (RuvB-L); that stretch reads MTDPSRLVTP…FGIPIRLNFY (183 aa). ATP contacts are provided by residues L22, R23, G64, K67, T68, T69, 130–132, R173, Y183, and R220; that span reads EDF. T68 contacts Mg(2+). The interval 184–254 is small ATPAse domain (RuvB-S); it reads TIEELESIVT…IADHALGALE (71 aa). The interval 257–349 is head domain (RuvB-H); sequence SAGLDAMDRR…GLFGDTGDQE (93 aa). DNA-binding residues include R293, R312, and R317.

It belongs to the RuvB family. Homohexamer. Forms an RuvA(8)-RuvB(12)-Holliday junction (HJ) complex. HJ DNA is sandwiched between 2 RuvA tetramers; dsDNA enters through RuvA and exits via RuvB. An RuvB hexamer assembles on each DNA strand where it exits the tetramer. Each RuvB hexamer is contacted by two RuvA subunits (via domain III) on 2 adjacent RuvB subunits; this complex drives branch migration. In the full resolvosome a probable DNA-RuvA(4)-RuvB(12)-RuvC(2) complex forms which resolves the HJ.

It is found in the cytoplasm. The enzyme catalyses ATP + H2O = ADP + phosphate + H(+). Its function is as follows. The RuvA-RuvB-RuvC complex processes Holliday junction (HJ) DNA during genetic recombination and DNA repair, while the RuvA-RuvB complex plays an important role in the rescue of blocked DNA replication forks via replication fork reversal (RFR). RuvA specifically binds to HJ cruciform DNA, conferring on it an open structure. The RuvB hexamer acts as an ATP-dependent pump, pulling dsDNA into and through the RuvAB complex. RuvB forms 2 homohexamers on either side of HJ DNA bound by 1 or 2 RuvA tetramers; 4 subunits per hexamer contact DNA at a time. Coordinated motions by a converter formed by DNA-disengaged RuvB subunits stimulates ATP hydrolysis and nucleotide exchange. Immobilization of the converter enables RuvB to convert the ATP-contained energy into a lever motion, pulling 2 nucleotides of DNA out of the RuvA tetramer per ATP hydrolyzed, thus driving DNA branch migration. The RuvB motors rotate together with the DNA substrate, which together with the progressing nucleotide cycle form the mechanistic basis for DNA recombination by continuous HJ branch migration. Branch migration allows RuvC to scan DNA until it finds its consensus sequence, where it cleaves and resolves cruciform DNA. The polypeptide is Holliday junction branch migration complex subunit RuvB (Rhodopseudomonas palustris (strain ATCC BAA-98 / CGA009)).